The chain runs to 1080 residues: Putative bifunctional amine oxidase DDB_G0291301 (1080 aa).

Residues 1–450 (MREFLKDDYD…TIAKSTVPTN (450 aa)) are putative sarcosine oxidase. FAD is bound at residue 10–40 (DVIVCGGGPVGLATAYRCAKAGKKVLCLEKS). A disordered region spans residues 445–464 (STVPTNQSSNPDGASSTAPT). The segment at 450–1080 (NQSSNPDGAS…NTAASIGGLK (631 aa)) is putative L-amino-acid oxidase. The helical transmembrane segment at 508-528 (VGIIGAGMAGLYAAMILQDLG) threads the bilayer. Residues Glu-535, Arg-544, and 563–564 (GA) each bind FAD. Substrate is bound at residue Tyr-886. FAD-binding positions include Glu-978 and 987-990 (VIGS).

In the N-terminal section; belongs to the MSOX/MTOX family. It in the C-terminal section; belongs to the flavin monoamine oxidase family. FAD is required as a cofactor.

Its subcellular location is the membrane. The enzyme catalyses sarcosine + O2 + H2O = formaldehyde + glycine + H2O2. It catalyses the reaction L-pipecolate + O2 = L-1-piperideine-6-carboxylate + H2O2 + H(+). The catalysed reaction is an L-alpha-amino acid + O2 + H2O = a 2-oxocarboxylate + H2O2 + NH4(+). Catalyzes an oxidative deamination of predominantly hydrophobic and aromatic L-amino acids. Metabolizes sarcosine, L-pipecolic acid and L-proline. The protein is Putative bifunctional amine oxidase DDB_G0291301 of Dictyostelium discoideum (Social amoeba).